The primary structure comprises 400 residues: MNNLAFLFPGQGSQFVGMGKSFWNDFVLAKRLFEEASDAISMDVKKLCFDGDMTELTRTMNAQPAILTVSVIAYQVYMQEIGIKPHFLAGHSLGEYSALVCAGVLSFQEAVKLIRQRGILMQNADPEQLGTMAAITQVYIQPLQDLCTEISTEDFPVGVACMNSDQQHVISGHRQAVEFVIKKAERMGANHTYLNVSAPFHSSMMRSASEQFQTALNQYSFRDAEWPIISNVTAIPYNNGHSVREHLQTHMTMPVRWAESMHYLLLHGVTEVIEMGPKNVLVGLLKKITNHIAAYPLGQTSDLHLLSDSAERNENIVNLRKKQLNKMMIQSIIARNYNKDAKTYSNLTTPLFPQIQLLKERVERKEVELSAEELEHSIHLCQLICEAKQLPTWEQLRILK.

Catalysis depends on residues S92 and H201.

The protein belongs to the FabD family.

The catalysed reaction is holo-[ACP] + malonyl-CoA = malonyl-[ACP] + CoA. In terms of biological role, is involved in the mycosubtilin synthetase assembly, by catalyzing the transfer of malonyl groups to a specific acyl-carrier-protein domain on MycA. The polypeptide is Malonyl CoA-acyl carrier protein transacylase (fenF) (Bacillus subtilis).